A 631-amino-acid polypeptide reads, in one-letter code: Eukaryotic translation initiation factor 3 subunit L (631 aa).

The PCI domain occupies 335-526 (TFVSVLIFFI…AETTLLDGER (192 aa)). Residues 571–631 (KSAPLPVRKP…PKSRQARIAA (61 aa)) form a disordered region. Low complexity predominate over residues 580-612 (PASSSAPAPATTAAPISKSGESAAPAPAEAPAA).

It belongs to the eIF-3 subunit L family. In terms of assembly, component of the eukaryotic translation initiation factor 3 (eIF-3) complex.

It localises to the cytoplasm. In terms of biological role, component of the eukaryotic translation initiation factor 3 (eIF-3) complex, which is involved in protein synthesis of a specialized repertoire of mRNAs and, together with other initiation factors, stimulates binding of mRNA and methionyl-tRNAi to the 40S ribosome. The eIF-3 complex specifically targets and initiates translation of a subset of mRNAs involved in cell proliferation. The polypeptide is Eukaryotic translation initiation factor 3 subunit L (Cryptococcus neoformans var. neoformans serotype D (strain B-3501A) (Filobasidiella neoformans)).